A 258-amino-acid chain; its full sequence is Indole-3-glycerol phosphate synthase (258 aa).

This sequence belongs to the TrpC family.

It catalyses the reaction 1-(2-carboxyphenylamino)-1-deoxy-D-ribulose 5-phosphate + H(+) = (1S,2R)-1-C-(indol-3-yl)glycerol 3-phosphate + CO2 + H2O. It participates in amino-acid biosynthesis; L-tryptophan biosynthesis; L-tryptophan from chorismate: step 4/5. The sequence is that of Indole-3-glycerol phosphate synthase from Exiguobacterium sibiricum (strain DSM 17290 / CCUG 55495 / CIP 109462 / JCM 13490 / 255-15).